We begin with the raw amino-acid sequence, 190 residues long: Cytoglobin (190 aa).

A disordered region spans residues Met-1–Glu-21. The Globin domain occupies Glu-18 to Lys-167. Cys-38 and Cys-83 form a disulfide bridge. Heme b-binding residues include His-81 and His-113.

It belongs to the globin family. In terms of assembly, monomeric. Homodimer; disulfide-linked in vitro. Also homooligomeric in vitro. Post-translationally, the formation of an intramolecular disulfide bond between cysteines Cys-38 and Cys-83 specifically enhances the nitrite reductase activity. In terms of tissue distribution, expressed in brain and retina by non-neuronal cells (at protein level). This is the major globin expressed in vascular smooth muscle and is not present in the endothelium (at protein level).

It is found in the cytoplasm. It localises to the nucleus. The catalysed reaction is Fe(II)-heme b-[protein] + nitric oxide + O2 = Fe(III)-heme b-[protein] + nitrate. It carries out the reaction 2 superoxide + 2 H(+) = H2O2 + O2. It catalyses the reaction Fe(III)-heme b-[protein] + nitric oxide + H2O = Fe(II)-heme b-[protein] + nitrite + 2 H(+). The enzyme catalyses H2O2 + AH2 = A + 2 H2O. The nitric oxide dioxygenase activity is activated by a reducing system composed of cytochrome b5, its upstream reductase CYB5R3 and NADH. Functionally, probable multifunctional globin with a hexacoordinated heme iron required for the catalysis of various reactions depending on redox condition of the cell as well as oxygen availability. Has a nitric oxide dioxygenase (NOD) activity and is most probably involved in cell-mediated and oxygen-dependent nitric oxide consumption. By scavenging this second messenger may regulate several biological processes including endothelium-mediated vasodilation and vascular tone. Under normoxic conditions functions as a nitric oxide dioxygenase (NOD) but under hypoxic conditions the globin may switch its function to that of a nitrite (NO2) reductase (NiR), generating nitric oxide. Could also have peroxidase and superoxide dismutase activities, detoxifying reactive oxygen species and protecting cells against oxidative stress. Also binds dioxygen with low affinity and could function as an oxygen sensor but has probably no function as a respiratory oxygen carrier. This chain is Cytoglobin, found in Mus musculus (Mouse).